A 148-amino-acid chain; its full sequence is Ribosome maturation factor RimP (148 aa).

The protein belongs to the RimP family.

The protein localises to the cytoplasm. Its function is as follows. Required for maturation of 30S ribosomal subunits. The polypeptide is Ribosome maturation factor RimP (Nautilia profundicola (strain ATCC BAA-1463 / DSM 18972 / AmH)).